Here is a 202-residue protein sequence, read N- to C-terminus: N-(5'-phosphoribosyl)anthranilate isomerase (202 aa).

It belongs to the TrpF family.

The enzyme catalyses N-(5-phospho-beta-D-ribosyl)anthranilate = 1-(2-carboxyphenylamino)-1-deoxy-D-ribulose 5-phosphate. It participates in amino-acid biosynthesis; L-tryptophan biosynthesis; L-tryptophan from chorismate: step 3/5. This Listeria welshimeri serovar 6b (strain ATCC 35897 / DSM 20650 / CCUG 15529 / CIP 8149 / NCTC 11857 / SLCC 5334 / V8) protein is N-(5'-phosphoribosyl)anthranilate isomerase.